Reading from the N-terminus, the 750-residue chain is Sulfhydryl oxidase 1 (750 aa).

Residues 1 to 32 (MGRCNRGSGPPSSLLLLLLLLLWLLAVPGASA) form the signal peptide. The Thioredoxin domain maps to 39 to 159 (YSPSDPLTLL…RERLIDALES (121 aa)). Residues Cys73 and Cys76 each act as nucleophile in the active site. 2 cysteine pairs are disulfide-bonded: Cys73–Cys76 and Cys104–Cys113. 2 N-linked (GlcNAc...) asparagine glycosylation sites follow: Asn133 and Asn246. Cysteines 396 and 408 form a disulfide. Positions 399–506 (SEPHFRGFPC…EDPQFPKVQW (108 aa)) constitute an ERV/ALR sulfhydryl oxidase domain. 3 residues coordinate FAD: Arg404, Trp411, and His415. Ser429 carries the post-translational modification Phosphoserine. A disulfide bond links Cys452 and Cys455. FAD-binding positions include Asp454, His458, 481–488 (WSSHNRVN), Lys503, and Trp506. A disulfide bridge connects residues Cys512 and Cys515. Asn578 carries N-linked (GlcNAc...) asparagine glycosylation. The tract at residues 578–645 (NSTVDLGKPE…REQPRGQWHL (68 aa)) is disordered. The segment covering 624–639 (PPEHMAELQTNEREQP) has biased composition (basic and acidic residues). A helical transmembrane segment spans residues 713-733 (ISLCVGLYSLSFMGLLAMYAY).

The protein belongs to the quiescin-sulfhydryl oxidase (QSOX) family. In terms of assembly, monomer. FAD serves as cofactor. In terms of processing, N-glycosylated. O-glycosylated on Thr and Ser residues.

It localises to the golgi apparatus membrane. It is found in the secreted. The catalysed reaction is 2 R'C(R)SH + O2 = R'C(R)S-S(R)CR' + H2O2. Catalyzes the oxidation of sulfhydryl groups in peptide and protein thiols to disulfides with the reduction of oxygen to hydrogen peroxide. Plays a role in disulfide bond formation in a variety of extracellular proteins. In fibroblasts, required for normal incorporation of laminin into the extracellular matrix, and thereby for normal cell-cell adhesion and cell migration. The polypeptide is Sulfhydryl oxidase 1 (QSOX1) (Pongo abelii (Sumatran orangutan)).